A 193-amino-acid polypeptide reads, in one-letter code: Bcl-2-binding component 3, isoforms 1/2 (193 aa).

Disordered regions lie at residues 1–28 (MARA…FPLG) and 71–138 (ALGG…REIG). Ser-10 is subject to Phosphoserine. Residues 71–82 (ALGGSRWPGGPR) are compositionally biased toward low complexity. The BH3 motif lies at 137-151 (IGAQLRRMADDLNAQ).

The protein belongs to the Bcl-2 family. Interacts with MCL1 and BCL2A1. Interacts (via BH3 domain) with BCL2. Interacts with BCL2L1/BCL-XL. Interacts (via BH3 domain) with NOL3/ARC (via CARD domain); this interaction prevents BBC3 association with BCL2 and results in CASP8 activation. As to expression, ubiquitously expressed.

The protein resides in the mitochondrion. Functionally, essential mediator of p53/TP53-dependent and p53/TP53-independent apoptosis. Promotes partial unfolding of BCL2L1 and dissociation of BCL2L1 from p53/TP53, releasing the bound p53/TP53 to induce apoptosis. Regulates ER stress-induced neuronal apoptosis. The polypeptide is Bcl-2-binding component 3, isoforms 1/2 (BBC3) (Homo sapiens (Human)).